The chain runs to 635 residues: Cationic amino acid transporter 4 (635 aa).

The next 3 membrane-spanning stretches (helical) occupy residues 42 to 62 (LTLL…TGAV), 66 to 86 (VAGP…LLAA), and 113 to 133 (LWAF…GAAV). Asn-151 and Asn-195 each carry an N-linked (GlcNAc...) asparagine glycan. The helical transmembrane segment at 197 to 217 (TFSAISLLVILFIVILGFILA) threads the bilayer. N-linked (GlcNAc...) asparagine glycosylation occurs at Asn-221. The next 5 helical transmembrane spans lie at 229–249 (FAPF…YAFV), 270–290 (LAIA…STVL), 318–338 (GFIV…SLLF), 365–385 (QVPV…ALLL), and 391–411 (VQFL…SIIV). Phosphoserine is present on residues Ser-422 and Ser-427. The chain crosses the membrane as a helical span at residues 478 to 498 (VTWALGVMLASAITIGCVLVF). N-linked (GlcNAc...) asparagine glycosylation occurs at Asn-500. The next 3 helical transmembrane spans lie at 508–528 (WGYI…LLVL), 539–559 (LFQI…NICL), and 567–587 (TWVR…GYGI). Residue Asn-601 is glycosylated (N-linked (GlcNAc...) asparagine).

It belongs to the amino acid-polyamine-organocation (APC) superfamily. Cationic amino acid transporter (CAT) (TC 2.A.3.3) family.

The protein resides in the membrane. Its function is as follows. Involved in the transport of the cationic amino acids (arginine, lysine and ornithine). The sequence is that of Cationic amino acid transporter 4 (SLC7A4) from Homo sapiens (Human).